Reading from the N-terminus, the 360-residue chain is Dehydrogenase mokE (360 aa).

Position 50–53 (50–53) interacts with NADP(+); that stretch reads SDTK. 134 to 141 contributes to the substrate binding site; that stretch reads AGISTAGL. NADP(+) is bound by residues 173-176, 196-199, Tyr214, 261-262, and Thr279; these read STAT, SPHN, and LN. 281-285 lines the substrate pocket; that stretch reads GPTIF. 350–351 is an NADP(+) binding site; the sequence is LS.

It belongs to the zinc-containing alcohol dehydrogenase family. As to quaternary structure, monomer.

The protein operates within polyketide biosynthesis; lovastatin biosynthesis. Dehydrogenase; part of the gene cluster that mediates the biosynthesis of monakolin K, also known as lovastatin, and which acts as a potent competitive inhibitor of HMG-CoA reductase. Monakolin K biosynthesis is performed in two stages. The first stage is catalyzed by the nonaketide synthase mokA, which belongs to type I polyketide synthases and catalyzes the iterative nine-step formation of the polyketide. This PKS stage is completed by the action of dehydrogenase mokE, which catalyzes the NADPH-dependent reduction of the unsaturated tetra-, penta- and heptaketide intermediates that arise during the mokA-mediated biosynthesis of the nonaketide chain and leads to dihydromonacolin L. Covalently bound dihydromonacolin L is released from mokA by the mokD esterase. Conversion of dihydromonacolin L into monacolin L and then monacolin J is subsequently performed with the participation of molecular oxygen and P450 monoogygenase mokC. Finally, mokF performs the conversion of monacoline J to monacoline K through the addition of the side-chain diketide moiety (2R)-2-methylbutanoate produced by the diketide synthase mokB. This is Dehydrogenase mokE from Monascus pilosus (Red mold).